Consider the following 716-residue polypeptide: FLYWCH-type zinc finger-containing protein 1 (716 aa).

The tract at residues methionine 1 to lysine 35 is disordered. Phosphoserine is present on serine 21. An FLYWCH-type 1 zinc finger spans residues phenylalanine 116 to histidine 174. Lysine 134 is covalently cross-linked (Glycyl lysine isopeptide (Lys-Gly) (interchain with G-Cter in SUMO2)). The disordered stretch occupies residues proline 191 to threonine 231. A compositionally biased stretch (low complexity) spans leucine 195–glycine 204. At serine 261 the chain carries Phosphoserine. The FLYWCH-type 2 zinc-finger motif lies at phenylalanine 273 to histidine 331. Serine 371 carries the post-translational modification Phosphoserine. The disordered stretch occupies residues glycine 377–phenylalanine 421. A Glycyl lysine isopeptide (Lys-Gly) (interchain with G-Cter in SUMO2) cross-link involves residue lysine 393. The segment at phenylalanine 421 to histidine 479 adopts an FLYWCH-type 3 zinc-finger fold. Serine 503 is subject to Phosphoserine. The FLYWCH-type 4 zinc-finger motif lies at phenylalanine 509–histidine 567. Position 591 is a phosphoserine (serine 591). An FLYWCH-type 5 zinc finger spans residues phenylalanine 600–histidine 658. A Glycyl lysine isopeptide (Lys-Gly) (interchain with G-Cter in SUMO2) cross-link involves residue lysine 685. At serine 696 the chain carries Phosphoserine.

Interacts with CTNNB1 (when unphosphorylated), perhaps preventing interaction of CTNNB1 with TCF4, and thereby regulating transcription activation; phosphorylation of CTNNB1 may inhibit the interaction.

Its subcellular location is the nucleus. It is found in the chromosome. The protein resides in the centromere. Its function is as follows. Transcription cofactor. Negatively regulates transcription activation by catenin beta-1 CTNNB1, perhaps acting by competing with TCF4 for CTNNB1 binding. May play a role in DNA-damage response signaling. Binds specifically to DNA sequences at peri-centromeric chromatin loci. This is FLYWCH-type zinc finger-containing protein 1 (FLYWCH1) from Homo sapiens (Human).